The chain runs to 202 residues: Small ribosomal subunit protein uS4 (202 aa).

A compositionally biased stretch (basic residues) spans 1–13; sequence MSRYRGPRLRVTR. The segment at 1-42 is disordered; it reads MSRYRGPRLRVTRRLGELPGLTRKASKKSNPPGQHGQARRKR. An S4 RNA-binding domain is found at 90 to 152; it reads NRLDNVCFRL…KASKKLVEGN (63 aa).

The protein belongs to the universal ribosomal protein uS4 family. As to quaternary structure, part of the 30S ribosomal subunit. Contacts protein S5. The interaction surface between S4 and S5 is involved in control of translational fidelity.

Functionally, one of the primary rRNA binding proteins, it binds directly to 16S rRNA where it nucleates assembly of the body of the 30S subunit. With S5 and S12 plays an important role in translational accuracy. This chain is Small ribosomal subunit protein uS4, found in Prochlorococcus marinus (strain AS9601).